Consider the following 147-residue polypeptide: Alpha-amylase/trypsin inhibitor (147 aa).

Residues 1–21 form the signal peptide; sequence MASDHRRFVLSGAVLLSVLAV.

Belongs to the protease inhibitor I6 (cereal trypsin/alpha-amylase inhibitor) family. In terms of processing, five disulfide bonds, which are essential for the inhibitor activity, are probably present. In terms of tissue distribution, endosperm.

The protein localises to the secreted. Functionally, alpha-amylase/trypsin inhibitor. The sequence is that of Alpha-amylase/trypsin inhibitor from Hordeum vulgare (Barley).